Here is a 383-residue protein sequence, read N- to C-terminus: Omega-6 fatty acid desaturase, endoplasmic reticulum isozyme 2 (383 aa).

A run of 3 helical transmembrane segments spans residues 61–81 (TIAF…PGPL), 85–105 (GMAI…VIAH), and 117–137 (LLDD…YFSW). The Histidine box-1 motif lies at 105 to 109 (HECGH). The short motif at 141 to 145 (HRRHH) is the Histidine box-2 element. Transmembrane regions (helical) follow at residues 179-199 (VLTL…LNVS), 225-245 (IYIS…LAMA), and 249-269 (AWVV…LVLI). Residues 315–319 (HVAHH) carry the Histidine box-3 motif.

Belongs to the fatty acid desaturase type 1 family.

Its subcellular location is the endoplasmic reticulum membrane. It functions in the pathway lipid metabolism; polyunsaturated fatty acid biosynthesis. Functionally, ER (microsomal) omega-6 fatty acid desaturase introduces the second double bond in the biosynthesis of 18:3 fatty acids, important constituents of plant membranes. It is thought to use cytochrome b5 as an electron donor and to act on fatty acids esterified to phosphatidylcholine and, possibly, other phospholipids. This chain is Omega-6 fatty acid desaturase, endoplasmic reticulum isozyme 2 (FAD2-2), found in Glycine max (Soybean).